Consider the following 200-residue polypeptide: Holliday junction resolvase RecU (200 aa).

The Mg(2+) site is built by Thr82, Asp84, Glu97, and Gln116.

This sequence belongs to the RecU family. The cofactor is Mg(2+).

Its subcellular location is the cytoplasm. The enzyme catalyses Endonucleolytic cleavage at a junction such as a reciprocal single-stranded crossover between two homologous DNA duplexes (Holliday junction).. Functionally, endonuclease that resolves Holliday junction intermediates in genetic recombination. Cleaves mobile four-strand junctions by introducing symmetrical nicks in paired strands. Promotes annealing of linear ssDNA with homologous dsDNA. Required for DNA repair, homologous recombination and chromosome segregation. The protein is Holliday junction resolvase RecU of Streptococcus gordonii (strain Challis / ATCC 35105 / BCRC 15272 / CH1 / DL1 / V288).